We begin with the raw amino-acid sequence, 570 residues long: Glutamate--tRNA ligase (570 aa).

Positions 105-115 (PNPDGAFHLGN) match the 'HIGH' region motif.

The protein belongs to the class-I aminoacyl-tRNA synthetase family. Glutamate--tRNA ligase type 2 subfamily.

The protein localises to the cytoplasm. It catalyses the reaction tRNA(Glu) + L-glutamate + ATP = L-glutamyl-tRNA(Glu) + AMP + diphosphate. Its function is as follows. Catalyzes the attachment of glutamate to tRNA(Glu) in a two-step reaction: glutamate is first activated by ATP to form Glu-AMP and then transferred to the acceptor end of tRNA(Glu). This is Glutamate--tRNA ligase from Pyrococcus horikoshii (strain ATCC 700860 / DSM 12428 / JCM 9974 / NBRC 100139 / OT-3).